Here is a 248-residue protein sequence, read N- to C-terminus: Triosephosphate isomerase (248 aa).

9–11 (NWK) contributes to the substrate binding site. Catalysis depends on H101, which acts as the Electrophile. E170 serves as the catalytic Proton acceptor. Residues G176, S208, and 229–230 (GG) contribute to the substrate site.

This sequence belongs to the triosephosphate isomerase family. In terms of assembly, homodimer.

It is found in the cytoplasm. The catalysed reaction is D-glyceraldehyde 3-phosphate = dihydroxyacetone phosphate. The protein operates within carbohydrate biosynthesis; gluconeogenesis. It functions in the pathway carbohydrate degradation; glycolysis; D-glyceraldehyde 3-phosphate from glycerone phosphate: step 1/1. Functionally, involved in the gluconeogenesis. Catalyzes stereospecifically the conversion of dihydroxyacetone phosphate (DHAP) to D-glyceraldehyde-3-phosphate (G3P). This Mycoplasmopsis pulmonis (strain UAB CTIP) (Mycoplasma pulmonis) protein is Triosephosphate isomerase.